A 782-amino-acid polypeptide reads, in one-letter code: Protein PAT1 homolog 1 (782 aa).

Disordered stretches follow at residues 96–153, 177–217, 332–372, and 460–481; these read GPKH…HSKP, LPES…YSAP, VREH…SKHM, and EVDSSPGFNDGSGDHKGSGKHL. Over residues 108-117 the composition is skewed to low complexity; sequence SGSFSRESSS. A compositionally biased stretch (polar residues) spans 208 to 217; it reads GGSQLTYSAP. A compositionally biased stretch (basic residues) spans 335–347; the sequence is HKHKSSHRSRKNR. Positions 348–366 are enriched in polar residues; the sequence is GLSQQTSDAASQKSETGLQ. A compositionally biased stretch (basic and acidic residues) spans 471 to 481; the sequence is SGDHKGSGKHL.

In terms of assembly, interacts with AFPH2/NINJA. In terms of tissue distribution, expressed in root vasculature, shoot apical meristem (SAM) and leaves.

Its function is as follows. Activator of mRNA decapping. Involved in mRNA decay via decapping. Involved in the regulation of root stem cell niche identity. Maintains root stem cell niche stability through the interaction with the negative regulator of jasmonate signaling AFPH2/NINJA, and the regulation of cell division. The chain is Protein PAT1 homolog 1 from Arabidopsis thaliana (Mouse-ear cress).